We begin with the raw amino-acid sequence, 1531 residues long: La-related protein Larp4B (1531 aa).

The segment covering 112–147 (HTHVAHQQQQQQQQQTIQQHLHQQQQQQSPHPAQHL) has biased composition (low complexity). Disordered regions lie at residues 112–148 (HTHV…QHLT) and 239–263 (QLPA…EPNI). Positions 262 to 351 (NIPLDKLKQM…RPNRKRCIII (90 aa)) constitute an HTH La-type RNA-binding domain. The region spanning 348–423 (CIIILREISN…KPIMARIKPK (76 aa)) is the RRM domain. Disordered regions lie at residues 533 to 605 (PLPP…QGGN), 710 to 736 (AHSH…ASSS), 748 to 768 (TAPA…QQTQ), 791 to 1135 (QEAG…SNQQ), 1160 to 1211 (DVVR…TPAL), and 1251 to 1285 (ASSK…QPSQ). The span at 565-578 (YNNNHRGNPNNVGG) shows a compositional bias: low complexity. Composition is skewed to low complexity over residues 754–768 (QPGQ…QQTQ) and 810–826 (SSNM…TSMS). Positions 860–884 (SSPSNPHPQQHLMSSSTGSNVQSAG) are enriched in polar residues. Residues 945–959 (ALSSQQQQHHLTTGT) show a composition bias toward low complexity. Residues 966–975 (HHYHHHHHHN) show a composition bias toward basic residues. A compositionally biased stretch (gly residues) spans 983–1004 (NSGGLGVSSGGSGGGGSGGGSG). A compositionally biased stretch (low complexity) spans 1031 to 1045 (HQQQQQQQQQQQQQQ). Over residues 1068–1086 (TSATAPHTPQATGGASLHN) the composition is skewed to polar residues. Residues 1087 to 1115 (STTSSSSSTGLGQKQTLHQQQQQAPQQHQ) are compositionally biased toward low complexity. Ser1123 carries the phosphoserine modification. Positions 1164 to 1173 (TGGGGGGGGK) are enriched in gly residues. Positions 1183 to 1200 (PQGQNQPHMAPNYQQHQP) are enriched in polar residues. Positions 1270 to 1280 (KSNKTEDEMHP) are enriched in basic and acidic residues. Residues Ser1370 and Ser1413 each carry the phosphoserine modification. 2 disordered regions span residues 1393 to 1418 (KAAA…TGSH) and 1450 to 1531 (GGAS…ANNS). 2 stretches are compositionally biased toward polar residues: residues 1467 to 1477 (ATNTTQGSSAV) and 1502 to 1515 (QHYG…TNAN).

Functionally, probable RNA binding protein. Negatively regulates myc at the protein level, via an unknown mechanism, and may therefore have a role in growth. Has no effect on myc mRNA levels. This chain is La-related protein Larp4B, found in Drosophila melanogaster (Fruit fly).